The following is a 486-amino-acid chain: MEVTAHYIGGKPFVGDTGESFATLNPATGEVLAHIEQADERVLGHAIESAKLGFSVWSSMSAAERSRCLLKAAQLIRDHNDELAELEVRDTGKPIQEASVVDIATGADVIEYFAGLVNGLGGEQQSLGSNQFFYTRREPLGICAGIGAWNYPIQIAMWKAAPALAAGNAMIFKPSEETPLSALKLAELFTQAGVPDGVFNVVQGDYRVGQMLTAHPEIDKVSFTGESGTGKKVMADSAATLKPVTMELGGKSPLIIFDDADLDDAVSAAMVANFYTQGEVCTHGTRVYVQRAMYDAFVEQLKERTEKLIVGDPMNMETQIGSLISKSHLEKVLGAISSAKESGATLLTGGFQVTERGLEKGCFVAPTVFVDCRDEMPHVQNEIFGPVMSVLVFDDEDEVIARANNTQYGLAAGVFTQNLSKAHRVIHQLQAGICWINTWGNSPAEMPVGGYKLSGIGRENGQETLLHYTQTKSVFVELGAFDSPYA.

The K(+) site is built by threonine 23 and aspartate 90. 147–149 (GAW) is a binding site for NAD(+). Lysine 159 serves as the catalytic Charge relay system. NAD(+) contacts are provided by residues 173–176 (KPSE) and 226–229 (ESGT). Position 241 (leucine 241) interacts with K(+). The Proton acceptor role is filled by glutamate 247. Glycine 249, cysteine 281, and glutamate 382 together coordinate NAD(+). The active-site Nucleophile is the cysteine 281. Position 281 is a cysteine sulfenic acid (-SOH) (cysteine 281). Residues lysine 452 and glycine 455 each contribute to the K(+) site. The Charge relay system role is filled by glutamate 459.

Belongs to the aldehyde dehydrogenase family. As to quaternary structure, dimer of dimers. The cofactor is K(+).

The catalysed reaction is betaine aldehyde + NAD(+) + H2O = glycine betaine + NADH + 2 H(+). It functions in the pathway amine and polyamine biosynthesis; betaine biosynthesis via choline pathway; betaine from betaine aldehyde: step 1/1. In terms of biological role, involved in the biosynthesis of the osmoprotectant glycine betaine. Catalyzes the irreversible oxidation of betaine aldehyde to the corresponding acid. The chain is Betaine aldehyde dehydrogenase from Vibrio vulnificus (strain CMCP6).